A 272-amino-acid chain; its full sequence is Sulfate transporter CysZ (272 aa).

A run of 4 helical transmembrane segments spans residues 29 to 49 (FVII…WLFI), 66 to 86 (WLSF…LLLF), 148 to 168 (IIAL…VPVL), and 219 to 239 (FVPV…TLMW).

Belongs to the CysZ family.

The protein localises to the cell inner membrane. Its function is as follows. High affinity, high specificity proton-dependent sulfate transporter, which mediates sulfate uptake. Provides the sulfur source for the cysteine synthesis pathway. This chain is Sulfate transporter CysZ, found in Haemophilus influenzae (strain 86-028NP).